The following is a 494-amino-acid chain: Fumarate hydratase, mitochondrial (494 aa).

Residues 1–15 (MLRASATRFLSQAKN) constitute a mitochondrion transit peptide. Residues 128–130 (SGT), 159–162 (HPND), 169–171 (SSN), and threonine 217 contribute to the substrate site. Histidine 218 functions as the Proton donor/acceptor in the catalytic mechanism. The active site involves serine 348. Residues serine 349 and 354-356 (KVN) each bind substrate.

It belongs to the class-II fumarase/aspartase family. Fumarase subfamily. As to quaternary structure, homotetramer.

Its subcellular location is the mitochondrion matrix. The protein localises to the cytoplasm. The protein resides in the nucleus. It carries out the reaction (S)-malate = fumarate + H2O. It functions in the pathway carbohydrate metabolism; tricarboxylic acid cycle; (S)-malate from fumarate: step 1/1. In terms of biological role, catalyzes the reversible stereospecific interconversion of fumarate to L-malate. In mitochondrion, catalyzes the hydration of fumarate to L-malate in the tricarboxylic acid (TCA) cycle to facilitate a transition step in the production of energy in the form of NADH. In cytoplasm and nucleus, involved in DNA repair in response to DNA damage: following DNA double-strand breaks (DSBs), translocates from the cytosol to the nucleus and promotes DNA repair by catalyzing the dehydration of L-malate to fumarate. The chain is Fumarate hydratase, mitochondrial from Rhizopus oryzae (Mucormycosis agent).